The primary structure comprises 304 residues: Protease HtpX homolog 1 (304 aa).

2 helical membrane passes run 17–37 (VTLFLLGLLYVGFVAALIALL) and 39–59 (SWVLVVVIVALVFGAQYWFSD). Residue histidine 140 coordinates Zn(2+). The active site involves glutamate 141. Histidine 144 is a binding site for Zn(2+). 2 helical membrane-spanning segments follow: residues 151–171 (AVITVASFLGVIAGLIVRFAF) and 186–206 (AVLAVVMGVSAAVYALSFLLI). Glutamate 214 contacts Zn(2+).

It belongs to the peptidase M48B family. The cofactor is Zn(2+).

The protein resides in the cell membrane. In Streptomyces coelicolor (strain ATCC BAA-471 / A3(2) / M145), this protein is Protease HtpX homolog 1.